A 479-amino-acid chain; its full sequence is Leucine-rich repeat-containing protein 74A (479 aa).

The span at 1 to 10 shows a compositional bias: acidic residues; the sequence is MDDDDIEPLE. The tract at residues 1 to 29 is disordered; it reads MDDDDIEPLEYETKDETEAALAPQSSEDT. LRR repeat units lie at residues 119–140, 147–167, 176–197, 204–225, 232–253, 260–281, 288–309, and 316–336; these read TVLKLELEDNSIQEEGILSLME, YLQELNVSDNNLGLEGARIIS, SLWKLKLSGNKFKEECALLLCQ, RIRSLNLSHNEFSDTAGEYLGQ, GLQSLNLSWNHFNVRGAVALCN, TLKKLDVSMNGFGNDGALALGD, CLVYVDVSRNGITNEGASRISK, and CLQVLKLFLNPVSLEGAYSLI.

The protein is Leucine-rich repeat-containing protein 74A of Rattus norvegicus (Rat).